Reading from the N-terminus, the 249-residue chain is Molybdate/tungstate transport system permease protein WtpB (249 aa).

The Cytoplasmic portion of the chain corresponds to 1–10; it reads MDRRDYLAYA. Residues 11–31 traverse the membrane as a helical segment; it reads FAGLGAFLVAFIGLPLFMIFI. The Extracellular portion of the chain corresponds to 32 to 56; the sequence is KQAYDLEALQRTLVDPLVIESIRNS. The 187-residue stretch at 53–239 folds into the ABC transmembrane type-1 domain; sequence IRNSLFTATV…TISLAVFIFL (187 aa). Residues 57–77 form a helical membrane-spanning segment; the sequence is LFTATVSTLLGILFGVPLGYV. The Cytoplasmic segment spans residues 78 to 96; it reads LARKEFKGKNFVQALIDTP. The chain crosses the membrane as a helical span at residues 97 to 117; the sequence is IVIPHSVVGIMLLVTFSDAIL. A topological domain (extracellular) is located at residue Asp-118. Residues 119–139 form a helical membrane-spanning segment; the sequence is NYKGIVAVMLFVSSPFIVNSA. Over 140 to 179 the chain is Cytoplasmic; the sequence is RDGFLSVDEKLEYVARTLGASGLRTFFSVTLPNAIHSIAS. A helical membrane pass occupies residues 180 to 200; sequence GAIMAWARAISEVGAILIVAY. At 201–223 the chain is on the extracellular side; that stretch reads YPKTAQVLIMEYFNNYGLRASRP. A helical transmembrane segment spans residues 224-244; it reads IAVILVTISLAVFIFLRWLVG. Over 245 to 249 the chain is Cytoplasmic; sequence RGRNA.

This sequence belongs to the binding-protein-dependent transport system permease family. As to quaternary structure, the complex is composed of two ATP-binding proteins (WtpC), two transmembrane proteins (WtpB) and a solute-binding protein (WtpA).

The protein resides in the cell membrane. Part of the ABC transporter complex WtpABC involved in molybdate/tungstate import. Probably responsible for the translocation of the substrate across the membrane. The polypeptide is Molybdate/tungstate transport system permease protein WtpB (Pyrococcus furiosus (strain ATCC 43587 / DSM 3638 / JCM 8422 / Vc1)).